The primary structure comprises 122 residues: Large ribosomal subunit protein uL14 (122 aa).

It belongs to the universal ribosomal protein uL14 family. As to quaternary structure, part of the 50S ribosomal subunit. Forms a cluster with proteins L3 and L19. In the 70S ribosome, L14 and L19 interact and together make contacts with the 16S rRNA in bridges B5 and B8.

Its function is as follows. Binds to 23S rRNA. Forms part of two intersubunit bridges in the 70S ribosome. The protein is Large ribosomal subunit protein uL14 of Teredinibacter turnerae (strain ATCC 39867 / T7901).